Here is a 78-residue protein sequence, read N- to C-terminus: DNA gyrase inhibitor YacG (78 aa).

Zn(2+) is bound by residues Cys7, Cys10, Cys26, and Cys30.

It belongs to the DNA gyrase inhibitor YacG family. In terms of assembly, interacts with GyrB. Zn(2+) is required as a cofactor.

Inhibits all the catalytic activities of DNA gyrase by preventing its interaction with DNA. Acts by binding directly to the C-terminal domain of GyrB, which probably disrupts DNA binding by the gyrase. The sequence is that of DNA gyrase inhibitor YacG from Shewanella piezotolerans (strain WP3 / JCM 13877).